We begin with the raw amino-acid sequence, 2273 residues long: Acetyl-CoA carboxylase, mitochondrial (2273 aa).

The transit peptide at Lys1–Leu104 directs the protein to the mitochondrion. One can recognise a Biotin carboxylation domain in the interval Val134–Leu635. The region spanning Lys292 to Met484 is the ATP-grasp domain. Residue Gly332–Gly337 participates in ATP binding. The active site involves Arg459. The region spanning Leu763–Thr837 is the Biotinyl-binding domain. At Lys804 the chain carries N6-biotinyllysine. The 336-residue stretch at Pro1532 to Glu1867 folds into the CoA carboxyltransferase N-terminal domain. Residues Pro1532 to Lys2187 are carboxyltransferase. The CoA site is built by Arg1776, Lys2080, and Arg2082. A CoA carboxyltransferase C-terminal domain is found at Arg1871–Lys2187.

The cofactor is biotin.

It localises to the mitochondrion. It carries out the reaction hydrogencarbonate + acetyl-CoA + ATP = malonyl-CoA + ADP + phosphate + H(+). The catalysed reaction is N(6)-biotinyl-L-lysyl-[protein] + hydrogencarbonate + ATP = N(6)-carboxybiotinyl-L-lysyl-[protein] + ADP + phosphate + H(+). It participates in lipid metabolism; malonyl-CoA biosynthesis; malonyl-CoA from acetyl-CoA: step 1/1. In terms of biological role, catalyzes the rate-limiting reaction in the mitochondrial fatty acid synthesis (FAS) type II pathway. Responsible for the production of the mitochondrial malonyl-CoA, used for the biosynthesis of the cofactor lipoic acid. This protein carries three functions: biotin carboxyl carrier protein, biotin carboxylase, and carboxyltransferase. The chain is Acetyl-CoA carboxylase, mitochondrial (HFA1) from Saccharomyces cerevisiae (strain JAY291) (Baker's yeast).